The sequence spans 241 residues: Large ribosomal subunit protein uL2 (241 aa).

Positions 200–241 (AVDHPHGGGNRQHPGRPTTISRHAPAGRKVGSIAAKRTGKRR) are disordered.

The protein belongs to the universal ribosomal protein uL2 family. Part of the 50S ribosomal subunit. Forms a bridge to the 30S subunit in the 70S ribosome.

Functionally, one of the primary rRNA binding proteins. Required for association of the 30S and 50S subunits to form the 70S ribosome, for tRNA binding and peptide bond formation. It has been suggested to have peptidyltransferase activity; this is somewhat controversial. Makes several contacts with the 16S rRNA in the 70S ribosome. The sequence is that of Large ribosomal subunit protein uL2 from Methanosphaera stadtmanae (strain ATCC 43021 / DSM 3091 / JCM 11832 / MCB-3).